The following is an 898-amino-acid chain: Filament-like plant protein 7 (898 aa).

Coiled-coil stretches lie at residues 23–224 and 287–320; these read EVVA…TAEA and EKINNLTEQLCLLEEENKTLREALNKKVSELQFS. Disordered regions lie at residues 429-482, 693-723, and 777-835; these read DNRP…DIKS, PGNQNLSRKTVEEEANDKTASASENELKLEE, and KSNN…GGNS. Low complexity predominate over residues 434 to 459; the sequence is SSPICSSDSISATGPVENESNENSSE. The segment covering 460 to 469 has biased composition (polar residues); sequence ATKTSGTVYS. A coiled-coil region spans residues 703–764; it reads VEEEANDKTA…KALTNSKETA (62 aa). Residues 808–822 show a composition bias toward basic and acidic residues; it reads MKAEDHNTGESKDQK.

Belongs to the FPP family. As to quaternary structure, interacts with WPP/MAF proteins.

The chain is Filament-like plant protein 7 (FPP7) from Arabidopsis thaliana (Mouse-ear cress).